The following is an 81-amino-acid chain: uncharacterized protein (81 aa).

This is an uncharacterized protein from Synechocystis sp. (strain ATCC 27184 / PCC 6803 / Kazusa).